Here is a 92-residue protein sequence, read N- to C-terminus: Small ribosomal subunit protein uS15 (92 aa).

Belongs to the universal ribosomal protein uS15 family. As to quaternary structure, part of the 30S ribosomal subunit. Forms a bridge to the 50S subunit in the 70S ribosome, contacting the 23S rRNA.

One of the primary rRNA binding proteins, it binds directly to 16S rRNA where it helps nucleate assembly of the platform of the 30S subunit by binding and bridging several RNA helices of the 16S rRNA. Functionally, forms an intersubunit bridge (bridge B4) with the 23S rRNA of the 50S subunit in the ribosome. This is Small ribosomal subunit protein uS15 from Symbiobacterium thermophilum (strain DSM 24528 / JCM 14929 / IAM 14863 / T).